Reading from the N-terminus, the 415-residue chain is Protein PIN-LIKES 4 (415 aa).

Residues 1-13 (MKLLELFIASSKP) lie on the Lumenal side of the membrane. Residues 14–34 (VVETLLITSVGFYLALDTVNL) traverse the membrane as a helical segment. The Cytoplasmic segment spans residues 35-44 (LGHDARKHLN). A helical transmembrane segment spans residues 45 to 61 (NIVFYVFSPSLIGSRLA). Residues 62–75 (DSVTYESLVKMWFM) are Lumenal-facing. Residues 76-96 (PVNVLLTFMIGSLLGWIVIVI) traverse the membrane as a helical segment. The Cytoplasmic portion of the chain corresponds to 97–106 (TKPPSQLRGL). A helical transmembrane segment spans residues 107-127 (IISCCASGNLGTMPLIIIPAI). At 128-143 (CKEKGGPFGDSESCEK) the chain is on the lumenal side. The chain crosses the membrane as a helical span at residues 144-161 (YGMGYVTLSMTAFFISVY). The Cytoplasmic portion of the chain corresponds to 162-244 (KHDTNWYVSG…RVVSLSKKVN (83 aa)). The chain crosses the membrane as a helical span at residues 245–265 (LGSIFAPATIAAIIALVIGLI). Over 266 to 285 (TPLRNLIIGTVAPFRVIQDS) the chain is Lumenal. A helical membrane pass occupies residues 286–306 (LTLLGDGAIPAMTLILGGNLL). Residues 307 to 322 (KGMRRSEVRSSEMKNS) lie on the Cytoplasmic side of the membrane. A helical transmembrane segment spans residues 323-343 (CIIGVLVARYILLPVSGVLLV). Over 344–355 (RGAYKLDLVTSE) the chain is Lumenal. A helical transmembrane segment spans residues 356–376 (PLYQFVLLLQYAVPPAMNLGT). Residues 377 to 389 (KTQLFGAGESECS) lie on the Cytoplasmic side of the membrane. The helical transmembrane segment at 390–410 (VIMLWTYSLAAVSLTVWPTFF) threads the bilayer. Topologically, residues 411-415 (MWLVT) are lumenal.

The protein belongs to the auxin efflux carrier (TC 2.A.69.2) family. As to expression, expressed in seedlings, rosette and cauline leaves, stems, flowers and siliques.

It localises to the endoplasmic reticulum membrane. Its function is as follows. Involved in cellular auxin homeostasis by regulating auxin metabolism. Regulates intracellular auxin accumulation at the endoplasmic reticulum and thus auxin availability for nuclear auxin signaling. This is Protein PIN-LIKES 4 from Arabidopsis thaliana (Mouse-ear cress).